The sequence spans 98 residues: Defensin-like protein 68 (98 aa).

Positions 1–19 are cleaved as a signal peptide; it reads MGSSKLLVALTLVVMITIS. 4 cysteine pairs are disulfide-bonded: C38–C88, C42–C65, C51–C86, and C55–C87.

The protein belongs to the DEFL family.

The protein resides in the secreted. The protein is Defensin-like protein 68 of Arabidopsis thaliana (Mouse-ear cress).